Here is a 762-residue protein sequence, read N- to C-terminus: MSAHQVDTVTHASADPDAAQPFKELGLKDDEYARIKEILGRRPTDAELAMYSVMWSEHCSYKSSKVHLGYFGKTTTDEMRANMLAGIGENAGVVDIGDGWAVTFKVESHNHPSYVEPYQGAATGVGGIVRDIMAMGARPIAVMDQLRFGAADAPDTRRVVDGVVRGVGGYGNSLGLPNIGGETVFDESYAGNPLVNALAAGVMRVEDLHLAFASGAGNKIILFGARTGLDGIGGVSVLASATFDDEGGDTGGRKKLPAVQVGDPFTEKVLIECCLDLYKAGLVVGIQDLGGAGLSCATSELAAAGDGGMHINLEKVPMRATGMTPAEVLSSESQERMCAVVTPENVDAFMEVCKKWDVLATDIGEVTDGEHLTISWHGETVVDVPPRTVAHEGPVYNRPVERPASQDALIANTTAGLKRPETDAELEATLLKMIASPALCSRKWITEQYDRYVRGNTVLAENADGGVIRIDEKTGRGIALSTDASGRYTALDPYTGAQLALAEAFRNVAVTGATPKAVSNCLNFGSPEDPGVMWQFQQAVRGLADGCATLGIPVTGGNVSFYNQTGSTAILPTPVVAVLGVIDDVHRRIPTGLGLEPGETLILLGDTHDEFDGSIWSQVEHGHLGGVPPKVDLAREQLLADILLASSRDGLVTAAHDLSEGGLAQAVVEAALAGETGCRILIPEGADPFVTLFSESSGRVLVAVPRTEETRFTGMCTARGLPWTRIGVVDEGSDSVEVQGHFSVTMAKLREAFEGTLPALFG.

His58 is an active-site residue. ATP contacts are provided by Tyr61 and Lys105. A Mg(2+)-binding site is contributed by Glu107. Residues 108–111 (SHNH) and Arg130 contribute to the substrate site. The Proton acceptor role is filled by His109. Asp131 provides a ligand contact to Mg(2+). Gln260 is a binding site for substrate. A Mg(2+)-binding site is contributed by Asp288. 332–334 (ESQ) serves as a coordination point for substrate. The ATP site is built by Asn520 and Gly557. Asn558 contacts Mg(2+). A substrate-binding site is contributed by Ser560.

The protein belongs to the FGAMS family. As to quaternary structure, monomer. Part of the FGAM synthase complex composed of 1 PurL, 1 PurQ and 2 PurS subunits.

Its subcellular location is the cytoplasm. It catalyses the reaction N(2)-formyl-N(1)-(5-phospho-beta-D-ribosyl)glycinamide + L-glutamine + ATP + H2O = 2-formamido-N(1)-(5-O-phospho-beta-D-ribosyl)acetamidine + L-glutamate + ADP + phosphate + H(+). Its pathway is purine metabolism; IMP biosynthesis via de novo pathway; 5-amino-1-(5-phospho-D-ribosyl)imidazole from N(2)-formyl-N(1)-(5-phospho-D-ribosyl)glycinamide: step 1/2. Functionally, part of the phosphoribosylformylglycinamidine synthase complex involved in the purines biosynthetic pathway. Catalyzes the ATP-dependent conversion of formylglycinamide ribonucleotide (FGAR) and glutamine to yield formylglycinamidine ribonucleotide (FGAM) and glutamate. The FGAM synthase complex is composed of three subunits. PurQ produces an ammonia molecule by converting glutamine to glutamate. PurL transfers the ammonia molecule to FGAR to form FGAM in an ATP-dependent manner. PurS interacts with PurQ and PurL and is thought to assist in the transfer of the ammonia molecule from PurQ to PurL. The polypeptide is Phosphoribosylformylglycinamidine synthase subunit PurL (Rhodococcus erythropolis (strain PR4 / NBRC 100887)).